Here is a 377-residue protein sequence, read N- to C-terminus: Compound eye opsin BCRH2 (377 aa).

The Extracellular portion of the chain corresponds to 1-53 (MTNATGPQMAYYGAASMDFGYPEGVSIVDFVRPEIKPYVHQHWYNYPPVNPMW). Residue N3 is glycosylated (N-linked (GlcNAc...) asparagine). Residues 54–78 (HYLLGVIYLFLGTVSIFGNGLVIYL) form a helical membrane-spanning segment. The Cytoplasmic portion of the chain corresponds to 79 to 90 (FNKSAALRTPAN). Residues 91-115 (ILVVNLALSDLIMLTTNVPFFTYNC) traverse the membrane as a helical segment. Residues 116-131 (FSGGVWMFSPQYCEIY) lie on the Extracellular side of the membrane. The cysteines at positions 128 and 205 are disulfide-linked. Residues 132 to 151 (ACLGAITGVCSIWLLCMISF) form a helical membrane-spanning segment. Topologically, residues 152–170 (DRYNIICNGFNGPKLTTGK) are cytoplasmic. The chain crosses the membrane as a helical span at residues 171–194 (AVVFALISWVIAIGCALPPFFGWG). Residues 195-218 (NYILEGILDSCSYDYLTQDFNTFS) lie on the Extracellular side of the membrane. Residues 219–246 (YNIFIFVFDYFLPAAIIVFSYVFIVKAI) form a helical membrane-spanning segment. Over 247 to 281 (FAHEAAMRAQAKKMNVSTLRSNEADAQRAEIRIAK) the chain is Cytoplasmic. The chain crosses the membrane as a helical span at residues 282-305 (TALVNVSLWFICWTPYALISLKGV). The Extracellular segment spans residues 306-313 (MGDTSGIT). The helical transmembrane segment at 314 to 338 (PLVSTLPALLAKSCSCYNPFVYAIS) threads the bilayer. K325 is modified (N6-(retinylidene)lysine). Topologically, residues 339–377 (HPKYRLAITQHLPWFCVHETETKSNDDSQSNSTVAQDKA) are cytoplasmic.

The protein belongs to the G-protein coupled receptor 1 family. Opsin subfamily. Phosphorylated on some or all of the serine and threonine residues present in the C-terminal region. In terms of tissue distribution, expressed in all of the seven retinular cells (R1-R7) forming the main rhabdom in each ommatidium.

It is found in the membrane. In terms of biological role, visual pigments are the light-absorbing molecules that mediate vision. They consist of an apoprotein, opsin, covalently linked to cis-retinal. This opsin produces visual pigments with maximal absorption in the blue-green region of the spectrum. The sequence is that of Compound eye opsin BCRH2 from Hemigrapsus sanguineus (Asian shore crab).